A 1104-amino-acid polypeptide reads, in one-letter code: SWI/SNF complex subunit SMARCC1 (1104 aa).

A marR-like, BRCT and chromo domains module region spans residues 27–301; that stretch reads LAVYRRKDGG…PVSFRQRIST (275 aa). Residues 37–163 form the MarR-like domain; the sequence is PASKFWESPD…IEKTLVQNNC (127 aa). A BRCT; N-terminus domain is found at 167–210; the sequence is PNIYLIPDIDLKLANKLKDIIKRHQGTFTDEKSKASHHIYPYPS. Lysine 178 participates in a covalent cross-link: Glycyl lysine isopeptide (Lys-Gly) (interchain with G-Cter in SUMO2). The Chromo domain maps to 216–244; sequence EWLRPVMRRDKQVLVHWGFYPDSYDTWVH. The 25-residue stretch at 260–284 folds into the BRCT; C-terminus domain; it reads KPWKVHVKWILDTDVFNEWMNEEDY. A disordered region spans residues 295-445; that stretch reads FRQRISTKNE…PGEDNVTEQT (151 aa). Residues 301 to 317 show a composition bias toward basic and acidic residues; that stretch reads TKNEEPVRSPERRDRKA. Residues serine 309, serine 327, and serine 329 each carry the phosphoserine modification. The residue at position 334 (threonine 334) is a Phosphothreonine. N6-acetyllysine occurs at positions 344 and 345. Residue serine 349 is modified to Phosphoserine. The residue at position 353 (lysine 353) is an N6-acetyllysine. The residue at position 356 (serine 356) is a Phosphoserine. Lysine 358 bears the N6-acetyllysine; alternate mark. Lysine 358 participates in a covalent cross-link: Glycyl lysine isopeptide (Lys-Gly) (interchain with G-Cter in SUMO2); alternate. A Phosphothreonine modification is found at threonine 397. In terms of domain architecture, SWIRM spans 448–545; that stretch reads IIIPSYASWF…YQVDPESRPM (98 aa). The residue at position 572 (serine 572) is a Phosphoserine. A Glycyl lysine isopeptide (Lys-Gly) (interchain with G-Cter in SUMO2) cross-link involves residue lysine 591. Positions 617 to 668 constitute an SANT domain; that stretch reads SAGREWTEQETLLLLEALEMYKDDWNKVSEHVGSRTQDECILHFLRLPIEDP. Residue lysine 738 forms a Glycyl lysine isopeptide (Lys-Gly) (interchain with G-Cter in SUMO2) linkage. The tract at residues 744-859 is disordered; the sequence is ARASGKVDPT…DAGKKKVEHE (116 aa). Serine 775 carries the post-translational modification Phosphoserine. Residues 775–784 are compositionally biased toward acidic residues; the sequence is SEEEKMETDP. A compositionally biased stretch (basic and acidic residues) spans 788–859; that stretch reads QPEKAENKVE…DAGKKKVEHE (72 aa). Residue lysine 795 forms a Glycyl lysine isopeptide (Lys-Gly) (interchain with G-Cter in SUMO2) linkage. Phosphoserine occurs at positions 821 and 824. Residues lysine 828 and lysine 855 each participate in a glycyl lysine isopeptide (Lys-Gly) (interchain with G-Cter in SUMO2) cross-link. Residues 909–945 adopt a coiled-coil conformation; the sequence is KLRHFEELETIMDREKEALEQQRQQLLTERQNFHMEQ. The residue at position 947 (lysine 947) is an N6-acetyllysine. 2 disordered regions span residues 955-1021 and 1041-1104; these read QQME…PGPG and IHPT…SATP. Low complexity predominate over residues 956-973; it reads QMEQQQQHGQTPQQAHQH. Composition is skewed to pro residues over residues 994-1017 and 1048-1057; these read QQPP…PGQI and PTPPGMPPMP. Arginine 1064 carries the post-translational modification Asymmetric dimethylarginine. Over residues 1073–1104 the composition is skewed to pro residues; it reads MYPPPPQQQQPPPPADGVPPPPAPGPPASATP.

This sequence belongs to the SMARCC family. Component of the multiprotein chromatin-remodeling complexes SWI/SNF: SWI/SNF-A (BAF), SWI/SNF-B (PBAF) and related complexes. The canonical complex contains a catalytic subunit (either SMARCA4/BRG1/BAF190A or SMARCA2/BRM/BAF190B) and at least SMARCE1, ACTL6A/BAF53, SMARCC1/BAF155, SMARCC2/BAF170, and SMARCB1/SNF5/BAF47. Other subunits specific to each of the complexes may also be present permitting several possible combinations developmentally and tissue specific. Component of the BAF complex, which includes at least actin (ACTB), ARID1A/BAF250A, ARID1B/BAF250B, SMARCA2/BRM, SMARCA4/BRG1, ACTL6A/BAF53, ACTL6B/BAF53B, SMARCE1/BAF57, SMARCC1/BAF155, SMARCC2/BAF170, SMARCB1/SNF5/INI1, and one or more SMARCD1/BAF60A, SMARCD2/BAF60B, or SMARCD3/BAF60C. In muscle cells, the BAF complex also contains DPF3. Component of neural progenitors-specific chromatin remodeling complex (npBAF complex) composed of at least, ARID1A/BAF250A or ARID1B/BAF250B, SMARCD1/BAF60A, SMARCD3/BAF60C, SMARCA2/BRM/BAF190B, SMARCA4/BRG1/BAF190A, SMARCB1/BAF47, SMARCC1/BAF155, SMARCE1/BAF57, SMARCC2/BAF170, PHF10/BAF45A, ACTL6A/BAF53A and actin. Component of neuron-specific chromatin remodeling complex (nBAF complex) composed of at least, ARID1A/BAF250A or ARID1B/BAF250B, SMARCD1/BAF60A, SMARCD3/BAF60C, SMARCA2/BRM/BAF190B, SMARCA4/BRG1/BAF190A, SMARCB1/BAF47, SMARCC1/BAF155, SMARCE1/BAF57, SMARCC2/BAF170, DPF1/BAF45B, DPF3/BAF45C, ACTL6B/BAF53B and actin. Component of the SWI/SNF-B (PBAF) chromatin remodeling complex, at least composed of SMARCA4/BRG1, SMARCB1/BAF47/SNF5, ACTL6A/BAF53A or ACTL6B/BAF53B, SMARCE1/BAF57, SMARCD1/BAF60A, SMARCD2/BAF60B, perhaps SMARCD3/BAF60C, SMARCC1/BAF155, SMARCC2/BAF170, PBRM1/BAF180, ARID2/BAF200 and actin. Component of SWI/SNF (GBAF) subcomplex, which includes at least BICRA or BICRAL (mutually exclusive), BRD9, SS18, SMARCA2/BRM, SMARCA4/BRG1/BAF190A, ACTL6A/BAF53, SMARCC1/BAF155, and SMARCD1/BAF60A. May also interact with the SIN3A histone deacetylase transcription repressor complex in conjunction with SMARCA2 and SMARCA4. The minimal complex composed of SMARCC1 and SMARCA4 seems to be able to associate with cyclin such as CCNE1 or transcription factors such as KLF1 or GATA1. Interacts with NR3C1 and SMARD1. Interacts with TRIP12; leading to disrupt interaction between TRIP12 and SMARCE1 and prevent SMARCE1 ubiquitination. Interacts with CEBPB (when not methylated). Interacts with KDM6B. Interacts with MKKS; the interaction takes place predominantly in the cytoplasm and may modulate SMARCC1 location. Interacts with DPF2. Interacts with PRDM1/BLIMP1. Interacts with DPF3a (isoform 2 of DPF3/BAF45C) and with HDGFL2 in a DPF3a-dependent manner. In terms of tissue distribution, highly expressed in adult brain, testis and thymus.

It localises to the nucleus. Its subcellular location is the cytoplasm. In terms of biological role, involved in transcriptional activation and repression of select genes by chromatin remodeling (alteration of DNA-nucleosome topology). Component of SWI/SNF chromatin remodeling complexes that carry out key enzymatic activities, changing chromatin structure by altering DNA-histone contacts within a nucleosome in an ATP-dependent manner. May stimulate the ATPase activity of the catalytic subunit of the complex. Belongs to the neural progenitors-specific chromatin remodeling complex (npBAF complex) and the neuron-specific chromatin remodeling complex (nBAF complex). During neural development a switch from a stem/progenitor to a postmitotic chromatin remodeling mechanism occurs as neurons exit the cell cycle and become committed to their adult state. The transition from proliferating neural stem/progenitor cells to postmitotic neurons requires a switch in subunit composition of the npBAF and nBAF complexes. As neural progenitors exit mitosis and differentiate into neurons, npBAF complexes which contain ACTL6A/BAF53A and PHF10/BAF45A, are exchanged for homologous alternative ACTL6B/BAF53B and DPF1/BAF45B or DPF3/BAF45C subunits in neuron-specific complexes (nBAF). The npBAF complex is essential for the self-renewal/proliferative capacity of the multipotent neural stem cells. The nBAF complex along with CREST plays a role regulating the activity of genes essential for dendrite growth. This chain is SWI/SNF complex subunit SMARCC1 (Smarcc1), found in Mus musculus (Mouse).